The primary structure comprises 248 residues: Pyridoxine 5'-phosphate synthase (248 aa).

Asparagine 9 contacts 3-amino-2-oxopropyl phosphate. 11–12 provides a ligand contact to 1-deoxy-D-xylulose 5-phosphate; that stretch reads DH. Residue arginine 20 coordinates 3-amino-2-oxopropyl phosphate. Residue histidine 45 is the Proton acceptor of the active site. Positions 47 and 52 each coordinate 1-deoxy-D-xylulose 5-phosphate. Glutamate 72 acts as the Proton acceptor in catalysis. Threonine 102 is a binding site for 1-deoxy-D-xylulose 5-phosphate. The active-site Proton donor is histidine 193. Residues glycine 194 and 215–216 each bind 3-amino-2-oxopropyl phosphate; that span reads GH.

The protein belongs to the PNP synthase family. In terms of assembly, homooctamer; tetramer of dimers.

It is found in the cytoplasm. It catalyses the reaction 3-amino-2-oxopropyl phosphate + 1-deoxy-D-xylulose 5-phosphate = pyridoxine 5'-phosphate + phosphate + 2 H2O + H(+). The protein operates within cofactor biosynthesis; pyridoxine 5'-phosphate biosynthesis; pyridoxine 5'-phosphate from D-erythrose 4-phosphate: step 5/5. In terms of biological role, catalyzes the complicated ring closure reaction between the two acyclic compounds 1-deoxy-D-xylulose-5-phosphate (DXP) and 3-amino-2-oxopropyl phosphate (1-amino-acetone-3-phosphate or AAP) to form pyridoxine 5'-phosphate (PNP) and inorganic phosphate. This Hydrogenovibrio crunogenus (strain DSM 25203 / XCL-2) (Thiomicrospira crunogena) protein is Pyridoxine 5'-phosphate synthase.